The chain runs to 368 residues: H-2 class I histocompatibility antigen, D-P alpha chain (368 aa).

The N-terminal stretch at 1–21 is a signal peptide; sequence MAPRTLLLLLAAALAPTQTRA. Residues 22 to 111 are alpha-1; sequence GPHSLRYFVT…LLGYYNQSKG (90 aa). The Extracellular portion of the chain corresponds to 22–303; sequence GPHSLRYFVT…RWEPPPSTDS (282 aa). N-linked (GlcNAc...) asparagine glycosylation occurs at Asn107. Residues 112–203 form an alpha-2 region; sequence GSHTIQGMRG…ELGNATLLCT (92 aa). A disulfide bridge connects residues Cys122 and Cys185. N-linked (GlcNAc...) asparagine glycosylation is found at Asn197 and Asn277. An alpha-3 region spans residues 204–295; it reads DPPKAHVTHH…GLPEPLTLRW (92 aa). One can recognise an Ig-like C1-type domain in the interval 206–294; the sequence is PKAHVTHHPR…EGLPEPLTLR (89 aa). A disulfide bridge connects residues Cys224 and Cys280. A connecting peptide region spans residues 296–303; it reads EPPPSTDS. A helical transmembrane segment spans residues 304–330; it reads YMVIVAVLVVLGAVFIIGAVVAFVMMM. The Cytoplasmic segment spans residues 331–368; it reads RRNTGGKGGDYTLAPGSQSSEMSLRDCKVMVHDSHSLA. Ser350 and Ser353 each carry phosphoserine.

It belongs to the MHC class I family. Heterodimer of an alpha chain and a beta chain (beta-2-microglobulin).

The protein resides in the membrane. Involved in the presentation of foreign antigens to the immune system. This chain is H-2 class I histocompatibility antigen, D-P alpha chain (H2-D1), found in Mus musculus (Mouse).